Consider the following 281-residue polypeptide: MEMO1 family protein PAE0818 (281 aa).

This sequence belongs to the MEMO1 family.

This chain is MEMO1 family protein PAE0818, found in Pyrobaculum aerophilum (strain ATCC 51768 / DSM 7523 / JCM 9630 / CIP 104966 / NBRC 100827 / IM2).